The following is a 273-amino-acid chain: 1,4-dihydroxy-2-naphthoyl-CoA synthase (273 aa).

Substrate is bound by residues R34, 73-77, Y85, 117-121, T143, S149, Y246, and K261; these read SGGDQ and YAVGG. Residue 142–144 coordinates hydrogencarbonate; that stretch reads QTG. The span at 254-265 shows a compositional bias: basic and acidic residues; that stretch reads GRDAFKEKRDPD. The tract at residues 254–273 is disordered; the sequence is GRDAFKEKRDPDFDQFPKFP.

This sequence belongs to the enoyl-CoA hydratase/isomerase family. MenB subfamily. The cofactor is hydrogencarbonate.

The catalysed reaction is 2-succinylbenzoyl-CoA + H(+) = 1,4-dihydroxy-2-naphthoyl-CoA + H2O. Its pathway is quinol/quinone metabolism; 1,4-dihydroxy-2-naphthoate biosynthesis; 1,4-dihydroxy-2-naphthoate from chorismate: step 6/7. It functions in the pathway quinol/quinone metabolism; menaquinone biosynthesis. Converts o-succinylbenzoyl-CoA (OSB-CoA) to 1,4-dihydroxy-2-naphthoyl-CoA (DHNA-CoA). The chain is 1,4-dihydroxy-2-naphthoyl-CoA synthase from Staphylococcus aureus (strain MRSA252).